Reading from the N-terminus, the 205-residue chain is Adenylyl-sulfate kinase (205 aa).

31 to 38 (GLSGAGKS) contributes to the ATP binding site. Serine 105 serves as the catalytic Phosphoserine intermediate.

It belongs to the APS kinase family.

The enzyme catalyses adenosine 5'-phosphosulfate + ATP = 3'-phosphoadenylyl sulfate + ADP + H(+). The protein operates within sulfur metabolism; hydrogen sulfide biosynthesis; sulfite from sulfate: step 2/3. Functionally, catalyzes the synthesis of activated sulfate. The sequence is that of Adenylyl-sulfate kinase from Shewanella sp. (strain MR-4).